We begin with the raw amino-acid sequence, 138 residues long: Acidic phospholipase A2 2 (138 aa).

Positions 1 to 16 are cleaved as a signal peptide; the sequence is MRTLWIVAVLLLGVEG. Intrachain disulfides connect Cys42–Cys131, Cys44–Cys60, Cys59–Cys111, Cys65–Cys138, Cys66–Cys104, Cys73–Cys97, and Cys91–Cys102. Residues Tyr43, Gly45, and Gly47 each coordinate Ca(2+). Residue His63 is part of the active site. Ca(2+) is bound at residue Asp64. The active site involves Asp105.

The protein belongs to the phospholipase A2 family. Group II subfamily. D49 sub-subfamily. Ca(2+) serves as cofactor. Expressed by the venom gland.

The protein localises to the secreted. It carries out the reaction a 1,2-diacyl-sn-glycero-3-phosphocholine + H2O = a 1-acyl-sn-glycero-3-phosphocholine + a fatty acid + H(+). Functionally, snake venom phospholipase A2 (PLA2) that displays edema-inducing activities, exhibits indirect hemolytic activity, and inhibits ADP-induced platelet aggregation. PLA2 catalyzes the calcium-dependent hydrolysis of the 2-acyl groups in 3-sn-phosphoglycerides. This chain is Acidic phospholipase A2 2, found in Protobothrops mucrosquamatus (Taiwan habu).